The sequence spans 146 residues: 3-hydroxyacyl-[acyl-carrier-protein] dehydratase FabZ (146 aa).

Histidine 49 is an active-site residue.

Belongs to the thioester dehydratase family. FabZ subfamily.

The protein localises to the cytoplasm. It catalyses the reaction a (3R)-hydroxyacyl-[ACP] = a (2E)-enoyl-[ACP] + H2O. Functionally, involved in unsaturated fatty acids biosynthesis. Catalyzes the dehydration of short chain beta-hydroxyacyl-ACPs and long chain saturated and unsaturated beta-hydroxyacyl-ACPs. The polypeptide is 3-hydroxyacyl-[acyl-carrier-protein] dehydratase FabZ (Pseudomonas putida (strain ATCC 700007 / DSM 6899 / JCM 31910 / BCRC 17059 / LMG 24140 / F1)).